A 306-amino-acid polypeptide reads, in one-letter code: 4-hydroxy-3-methylbut-2-enyl diphosphate reductase (306 aa).

Cys12 is a [4Fe-4S] cluster binding site. Residues His41 and His74 each coordinate (2E)-4-hydroxy-3-methylbut-2-enyl diphosphate. 2 residues coordinate dimethylallyl diphosphate: His41 and His74. Positions 41 and 74 each coordinate isopentenyl diphosphate. [4Fe-4S] cluster is bound at residue Cys96. His124 is a binding site for (2E)-4-hydroxy-3-methylbut-2-enyl diphosphate. A dimethylallyl diphosphate-binding site is contributed by His124. Isopentenyl diphosphate is bound at residue His124. Residue Glu126 is the Proton donor of the active site. A (2E)-4-hydroxy-3-methylbut-2-enyl diphosphate-binding site is contributed by Thr164. Cys194 serves as a coordination point for [4Fe-4S] cluster. Residues Ser222, Ser223, Asn224, and Ser266 each coordinate (2E)-4-hydroxy-3-methylbut-2-enyl diphosphate. Positions 222, 223, 224, and 266 each coordinate dimethylallyl diphosphate. 4 residues coordinate isopentenyl diphosphate: Ser222, Ser223, Asn224, and Ser266.

It belongs to the IspH family. Requires [4Fe-4S] cluster as cofactor.

It carries out the reaction isopentenyl diphosphate + 2 oxidized [2Fe-2S]-[ferredoxin] + H2O = (2E)-4-hydroxy-3-methylbut-2-enyl diphosphate + 2 reduced [2Fe-2S]-[ferredoxin] + 2 H(+). The catalysed reaction is dimethylallyl diphosphate + 2 oxidized [2Fe-2S]-[ferredoxin] + H2O = (2E)-4-hydroxy-3-methylbut-2-enyl diphosphate + 2 reduced [2Fe-2S]-[ferredoxin] + 2 H(+). It participates in isoprenoid biosynthesis; dimethylallyl diphosphate biosynthesis; dimethylallyl diphosphate from (2E)-4-hydroxy-3-methylbutenyl diphosphate: step 1/1. The protein operates within isoprenoid biosynthesis; isopentenyl diphosphate biosynthesis via DXP pathway; isopentenyl diphosphate from 1-deoxy-D-xylulose 5-phosphate: step 6/6. Catalyzes the conversion of 1-hydroxy-2-methyl-2-(E)-butenyl 4-diphosphate (HMBPP) into a mixture of isopentenyl diphosphate (IPP) and dimethylallyl diphosphate (DMAPP). Acts in the terminal step of the DOXP/MEP pathway for isoprenoid precursor biosynthesis. The chain is 4-hydroxy-3-methylbut-2-enyl diphosphate reductase from Ruthia magnifica subsp. Calyptogena magnifica.